A 507-amino-acid chain; its full sequence is tRNA (guanine(6)-N(2))-methyltransferase THUMP3 (507 aa).

The region spanning 165-285 is the THUMP domain; it reads KIDQRNVKKE…DNEVIVGIAL (121 aa).

This sequence belongs to the methyltransferase superfamily. In terms of assembly, part of the heterodimeric THUMPD3-TRM112 methyltransferase complex; this complex forms an active tRNA methyltransferase, where TRMT112 acts as an activator of the catalytic subunit THUMPD3.

It is found in the cytoplasm. The catalysed reaction is guanosine(6) in tRNA + S-adenosyl-L-methionine = N(2)-methylguanosine(6) in tRNA + S-adenosyl-L-homocysteine + H(+). It catalyses the reaction guanosine(7) in tRNA + S-adenosyl-L-methionine = N(2)-methylguanosine(7) in tRNA + S-adenosyl-L-homocysteine + H(+). Catalytic subunit of the THUMPD3-TRM112 methyltransferase complex, that specifically mediates the S-adenosyl-L-methionine-dependent N(2)-methylation of guanosine nucleotide at position 6 (m2G6) in tRNAs. This is one of the major tRNA (guanine-N(2))-methyltransferases. Also catalyzes the S-adenosyl-L-methionine-dependent N(2)-methylation of guanosine nucleotide at position 7 of tRNA(Trp). The polypeptide is tRNA (guanine(6)-N(2))-methyltransferase THUMP3 (Homo sapiens (Human)).